The chain runs to 292 residues: ATP synthase gamma chain (292 aa).

This sequence belongs to the ATPase gamma chain family. As to quaternary structure, F-type ATPases have 2 components, CF(1) - the catalytic core - and CF(0) - the membrane proton channel. CF(1) has five subunits: alpha(3), beta(3), gamma(1), delta(1), epsilon(1). CF(0) has three main subunits: a, b and c.

The protein localises to the cell inner membrane. Functionally, produces ATP from ADP in the presence of a proton gradient across the membrane. The gamma chain is believed to be important in regulating ATPase activity and the flow of protons through the CF(0) complex. This Nitrobacter winogradskyi (strain ATCC 25391 / DSM 10237 / CIP 104748 / NCIMB 11846 / Nb-255) protein is ATP synthase gamma chain.